The following is an 885-amino-acid chain: MQEAIILLALLGAMSGGEALHLILLPATGNVAENSPPGTSVHKFSVKLSASLSPVIPGFPQIVNSNPLTEAFRVNWLSGTYFEVVTTGMEQLDFETGPNIFDLQIYVKDEVGVTDLQVLTVQVTDVNEPPQFQGNLAEGLHLYIVERANPGFIYQVEAFDPEDTSRNIPLSYFLISPPKSFRMSANGTLFSTTELDFEAGHRSFHLIVEVRDSGGLKASTELQVNIVNLNDEVPRFTSPTRVYTVLEELSPGTIVANITAEDPDDEGFPSHLLYSITTVSKYFMINQLTGTIQVAQRIDRDAGELRQNPTISLEVLVKDRPYGGQENRIQITFIVEDVNDNPATCQKFTFSIMVPERTAKGTLLLDLNKFCFDDDSEAPNNRFNFTMPSGVGSGSRFLQDPAGSGKIVLIGDLDYENPSNLAAGNKYTVIIQVQDVAPPYYKNNVYVYILTSPENEFPLIFDRPSYVFDVSERRPARTRVGQVRATDKDLPQSSLLYSISTGGASLQYPNVFWINPKTGELQLVTKVDCETTPIYILRIQATNNEDTSSVTVTVNILEENDEKPICTPNSYFLALPVDLKVGTNIQNFKLTCTDLDSSPRSFRYSIGPGNVNNHFTFSPNAGSNVTRLLLTSRFDYAGGFDKIWDYKLLVYVTDDNLMSDRKKAEALVETGTVTLSIKVIPHPTTIITTTPRPRVTYQVLRKNVYSPSAWYVPFVITLGSILLLGLLVYLVVLLAKAIHRHCPCKTGKNKEPLTKKGETKTAERDVVVETIQMNTIFDGEAIDPVTGETYEFNSKTGARKWKDPLTQMPKWKESSHQGAAPRRVTAGEGMGSLRSANWEEDELSGKAWAEDAGLGSRNEGGKLGNPKNRNPAFMNRAYPKPHPGK.

An N-terminal signal peptide occupies residues 1 to 19; that stretch reads MQEAIILLALLGAMSGGEA. Residues 20 to 713 lie on the Extracellular side of the membrane; that stretch reads LHLILLPATG…VYSPSAWYVP (694 aa). Cadherin domains lie at 23–132, 136–236, 237–344, 346–466, 462–566, and 567–695; these read ILLP…PPQF, LAEG…VPRF, TSPT…NPAT, QKFT…RPSY, DRPS…KPIC, and TPNS…RPRV. N-linked (GlcNAc...) asparagine glycans are attached at residues Asn-186 and Asn-257. N-linked (GlcNAc...) asparagine glycosylation is present at Asn-624. The chain crosses the membrane as a helical span at residues 714–734; that stretch reads FVITLGSILLLGLLVYLVVLL. The Cytoplasmic segment spans residues 735 to 885; the sequence is AKAIHRHCPC…RAYPKPHPGK (151 aa). Residues 808–885 form a disordered region; the sequence is MPKWKESSHQ…RAYPKPHPGK (78 aa).

In terms of assembly, (Microbial infection) Interacts (via N-terminus) with human rhinovirus C capsid proteins VP1, VP2 and VP3. Expressed in bronchial epithelium from adults and in fetal lung tissue.

The protein localises to the cell membrane. Cadherins are calcium-dependent cell adhesion proteins. They preferentially interact with themselves in a homophilic manner in connecting cells; cadherins may thus contribute to the sorting of heterogeneous cell types. In terms of biological role, (Microbial infection) Acts as a receptor for human rhinovirus C. This is Cadherin-related family member 3 (CDHR3) from Homo sapiens (Human).